The primary structure comprises 104 residues: Large ribosomal subunit protein uL23 (104 aa).

This sequence belongs to the universal ribosomal protein uL23 family. As to quaternary structure, part of the 50S ribosomal subunit. Contacts protein L29, and trigger factor when it is bound to the ribosome.

Functionally, one of the early assembly proteins it binds 23S rRNA. One of the proteins that surrounds the polypeptide exit tunnel on the outside of the ribosome. Forms the main docking site for trigger factor binding to the ribosome. This Polynucleobacter necessarius subsp. necessarius (strain STIR1) protein is Large ribosomal subunit protein uL23.